A 378-amino-acid polypeptide reads, in one-letter code: Nitronate monooxygenase (378 aa).

The propeptide occupies M1–Q15. P37–Y39 contacts FMN. The Proton acceptor role is filled by H196. H196 serves as a coordination point for substrate. Residues A229 to G231 and G252 to T253 contribute to the FMN site.

It belongs to the nitronate monooxygenase family. NMO class II subfamily. In terms of assembly, homodimer. The cofactor is FMN.

It carries out the reaction ethylnitronate + O2 = chemical entity + acetaldehyde + nitrite + H(+). Its function is as follows. Catalyzes the oxidation of alkyl nitronates to produce the corresponding carbonyl compounds and nitrites. Anionic forms of nitroalkanes are much better substrates than are neutral forms. The sequence is that of Nitronate monooxygenase (ncd-2) from Neurospora crassa (strain ATCC 24698 / 74-OR23-1A / CBS 708.71 / DSM 1257 / FGSC 987).